The following is a 169-amino-acid chain: Crossover junction endodeoxyribonuclease RuvC (169 aa).

Active-site residues include aspartate 11, glutamate 71, and aspartate 143. Mg(2+) contacts are provided by aspartate 11, glutamate 71, and aspartate 143.

Belongs to the RuvC family. As to quaternary structure, homodimer which binds Holliday junction (HJ) DNA. The HJ becomes 2-fold symmetrical on binding to RuvC with unstacked arms; it has a different conformation from HJ DNA in complex with RuvA. In the full resolvosome a probable DNA-RuvA(4)-RuvB(12)-RuvC(2) complex forms which resolves the HJ. Mg(2+) serves as cofactor.

It is found in the cytoplasm. The enzyme catalyses Endonucleolytic cleavage at a junction such as a reciprocal single-stranded crossover between two homologous DNA duplexes (Holliday junction).. Functionally, the RuvA-RuvB-RuvC complex processes Holliday junction (HJ) DNA during genetic recombination and DNA repair. Endonuclease that resolves HJ intermediates. Cleaves cruciform DNA by making single-stranded nicks across the HJ at symmetrical positions within the homologous arms, yielding a 5'-phosphate and a 3'-hydroxyl group; requires a central core of homology in the junction. The consensus cleavage sequence is 5'-(A/T)TT(C/G)-3'. Cleavage occurs on the 3'-side of the TT dinucleotide at the point of strand exchange. HJ branch migration catalyzed by RuvA-RuvB allows RuvC to scan DNA until it finds its consensus sequence, where it cleaves and resolves the cruciform DNA. This chain is Crossover junction endodeoxyribonuclease RuvC, found in Rhizobium johnstonii (strain DSM 114642 / LMG 32736 / 3841) (Rhizobium leguminosarum bv. viciae).